A 179-amino-acid polypeptide reads, in one-letter code: Probable phosphopantothenoylcysteine decarboxylase (179 aa).

Residue asparagine 124 participates in substrate binding. The active-site Proton donor is cysteine 157.

This sequence belongs to the HFCD (homooligomeric flavin containing Cys decarboxylase) superfamily. Requires FMN as cofactor.

It catalyses the reaction N-[(R)-4-phosphopantothenoyl]-L-cysteine + H(+) = (R)-4'-phosphopantetheine + CO2. Its pathway is cofactor biosynthesis; coenzyme A biosynthesis; CoA from (R)-pantothenate: step 3/5. Catalyzes the decarboxylation of 4'-phosphopantothenoylcysteine to 4'-phosphopantetheine. The sequence is that of Probable phosphopantothenoylcysteine decarboxylase (coaC) from Streptococcus mutans serotype c (strain ATCC 700610 / UA159).